The following is a 192-amino-acid chain: MNAIWIAVAAVSLLGLAFGAILGYASRRFAVEDDPVVEKIDEILPQSQCGQCGYPGCRPYAEAISCNGEKINRCAPGGEAVMLKIAELLNVEAQPLDGEAQELTPARMVAVIDENNCIGCTKCIQACPVDAIVGATRAMHTVMSDLCTGCNLCVDPCPTHCISLQPVAETPDSWKWDLNTIPVRIIPVEHHA.

The hydrophobic stretch occupies residues 1 to 26 (MNAIWIAVAAVSLLGLAFGAILGYAS). Residues 32-91 (EDDPVVEKIDEILPQSQCGQCGYPGCRPYAEAISCNGEKINRCAPGGEAVMLKIAELLNV) enclose the 4Fe-4S domain. Residues Cys49, Cys52, Cys57, Cys74, Cys117, Cys120, Cys123, Cys127, Cys147, Cys150, Cys153, and Cys157 each coordinate [4Fe-4S] cluster. 4Fe-4S ferredoxin-type domains are found at residues 108 to 137 (MVAV…GATR) and 138 to 167 (AMHT…LQPV).

Belongs to the 4Fe4S bacterial-type ferredoxin family. RnfB subfamily. As to quaternary structure, the complex is composed of six subunits: RsxA, RsxB, RsxC, RsxD, RsxE and RsxG. The cofactor is [4Fe-4S] cluster.

Its subcellular location is the cell inner membrane. Part of a membrane-bound complex that couples electron transfer with translocation of ions across the membrane. Required to maintain the reduced state of SoxR. The protein is Ion-translocating oxidoreductase complex subunit B of Shigella dysenteriae serotype 1 (strain Sd197).